Consider the following 430-residue polypeptide: GTPase Obg (430 aa).

An Obg domain is found at 1–158 (MFVDQVKISL…LEVTLELKLL (158 aa)). Residues 118-145 (RGGRGGRGNSRFATPRNPAPDFSENGEP) are disordered. The OBG-type G domain occupies 159–329 (ADVGLVGFPS…LLYQIADKLE (171 aa)). Residues 165-172 (GFPSVGKS), 190-194 (FTTIK), 212-215 (DLPG), 282-285 (NKMD), and 310-312 (STI) contribute to the GTP site. The Mg(2+) site is built by S172 and T192. The OCT domain maps to 352-430 (KHTPSADKFT…ILGGEFEFVE (79 aa)).

It belongs to the TRAFAC class OBG-HflX-like GTPase superfamily. OBG GTPase family. As to quaternary structure, monomer. The cofactor is Mg(2+).

It localises to the cytoplasm. In terms of biological role, an essential GTPase which binds GTP, GDP and possibly (p)ppGpp with moderate affinity, with high nucleotide exchange rates and a fairly low GTP hydrolysis rate. Plays a role in control of the cell cycle, stress response, ribosome biogenesis and in those bacteria that undergo differentiation, in morphogenesis control. This is GTPase Obg from Staphylococcus epidermidis (strain ATCC 12228 / FDA PCI 1200).